The sequence spans 216 residues: Hydrogenase-4 component E (216 aa).

Residues 1 to 3 (MTG) lie on the Periplasmic side of the membrane. Residues 4-24 (SMIVNNLAGLMMLTSLFVISV) traverse the membrane as a helical segment. The Cytoplasmic portion of the chain corresponds to 25–38 (KSYRLSCGFYACQS). 2 helical membrane-spanning segments follow: residues 39-59 (LVLV…QLLI) and 60-80 (WSAS…TYAA). The Cytoplasmic segment spans residues 81–92 (RNIPQNIPEKAL). Residues 93-113 (FGPAMMALLAALIVLLCAFVV) form a helical membrane-spanning segment. Residues 114 to 122 (QPVKLPMAT) are Periplasmic-facing. The helical transmembrane segment at 123–143 (GLKPALAVALGHFLLGLLCIV) threads the bilayer. The Cytoplasmic portion of the chain corresponds to 144–150 (SQRNILR). A helical transmembrane segment spans residues 151–171 (QIFGYCLMENGSHLVLALLAW). Over 172-175 (RAPE) the chain is Periplasmic. A helical transmembrane segment spans residues 176-196 (LVEIGIATDAIFAVIVMVLLA). The Cytoplasmic portion of the chain corresponds to 197 to 216 (RKIWRTHGTLDVNNLTALKG).

The protein resides in the cell inner membrane. The polypeptide is Hydrogenase-4 component E (hyfE) (Escherichia coli O157:H7).